Consider the following 219-residue polypeptide: MAAHGQGFDGVERRGLMFVLSSPSGAGKTTLSRLLIERVEGLSLSVSATTRPMRPGEVDGRDYRFVDKATFAVMVKCDELLEWATVFDNRYGTPRAPVEAALSSGRDVLFDIDWQGTQQLREKARADVVSVFILPPSATDLERRLHTRAQDSDEVIRGRMDRAAHELSHWAEYDYIVINQDIDEAFAEVQSILKAERLKRERRTGLTAFVRELQRQLEN.

Positions Gly-15 to Lys-194 constitute a Guanylate kinase-like domain. Residue Ser-22–Thr-29 coordinates ATP.

It belongs to the guanylate kinase family.

It localises to the cytoplasm. The enzyme catalyses GMP + ATP = GDP + ADP. Functionally, essential for recycling GMP and indirectly, cGMP. In Nitrobacter hamburgensis (strain DSM 10229 / NCIMB 13809 / X14), this protein is Guanylate kinase.